Consider the following 341-residue polypeptide: UDP-glucuronic acid decarboxylase 5 (341 aa).

The segment at 1–21 (MASSDKQTSPKPPPSPSPLRN) is disordered. An NAD(+)-binding site is contributed by 60–85 (DNYFTGSKDNLKKWIGHPRFELIRHD). Arginine 169 contacts substrate. The active-site Proton acceptor is tyrosine 172. 172-176 (YDEGK) contacts NAD(+). Asparagine 201 contacts substrate. Arginine 213 provides a ligand contact to NAD(+). Residues 214–218 (VVSNF), 231–238 (QKPGTQTR), and 298–302 (DPRQR) each bind substrate.

Belongs to the NAD(P)-dependent epimerase/dehydratase family. UDP-glucuronic acid decarboxylase subfamily. It depends on NAD(+) as a cofactor.

Its subcellular location is the cytoplasm. It catalyses the reaction UDP-alpha-D-glucuronate + H(+) = UDP-alpha-D-xylose + CO2. It functions in the pathway nucleotide-sugar biosynthesis; UDP-alpha-D-xylose biosynthesis; UDP-alpha-D-xylose from UDP-alpha-D-glucuronate: step 1/1. In terms of biological role, catalyzes the NAD-dependent decarboxylation of UDP-glucuronic acid to UDP-xylose. Necessary for the biosynthesis of the core tetrasaccharide in glycosaminoglycan biosynthesis. This is UDP-glucuronic acid decarboxylase 5 (UXS5) from Arabidopsis thaliana (Mouse-ear cress).